A 497-amino-acid polypeptide reads, in one-letter code: tRNA-2-methylthio-N(6)-dimethylallyladenosine synthase (497 aa).

Residues 44 to 161 (KKVFVTTQGC…LPELYDQSHQ (118 aa)) enclose the MTTase N-terminal domain. [4Fe-4S] cluster-binding residues include Cys-53, Cys-90, Cys-124, Cys-205, Cys-209, and Cys-212. Positions 191 to 423 (RVEGFKAFVS…QKVIIDSTLA (233 aa)) constitute a Radical SAM core domain. Residues 426-494 (HEMVGTTTRV…PHMVKGEIEA (69 aa)) form the TRAM domain.

It belongs to the methylthiotransferase family. MiaB subfamily. Monomer. It depends on [4Fe-4S] cluster as a cofactor.

The protein localises to the cytoplasm. It carries out the reaction N(6)-dimethylallyladenosine(37) in tRNA + (sulfur carrier)-SH + AH2 + 2 S-adenosyl-L-methionine = 2-methylsulfanyl-N(6)-dimethylallyladenosine(37) in tRNA + (sulfur carrier)-H + 5'-deoxyadenosine + L-methionine + A + S-adenosyl-L-homocysteine + 2 H(+). Its function is as follows. Catalyzes the methylthiolation of N6-(dimethylallyl)adenosine (i(6)A), leading to the formation of 2-methylthio-N6-(dimethylallyl)adenosine (ms(2)i(6)A) at position 37 in tRNAs that read codons beginning with uridine. The sequence is that of tRNA-2-methylthio-N(6)-dimethylallyladenosine synthase from Psychrobacter cryohalolentis (strain ATCC BAA-1226 / DSM 17306 / VKM B-2378 / K5).